The sequence spans 567 residues: Dihydroxy-acid dehydratase 3 (567 aa).

Cysteine 57 contacts [2Fe-2S] cluster. Mg(2+) is bound at residue aspartate 89. Cysteine 130 serves as a coordination point for [2Fe-2S] cluster. The Mg(2+) site is built by aspartate 131 and lysine 132. The residue at position 132 (lysine 132) is an N6-carboxylysine. Cysteine 202 provides a ligand contact to [2Fe-2S] cluster. Glutamate 454 lines the Mg(2+) pocket. Serine 480 (proton acceptor) is an active-site residue.

This sequence belongs to the IlvD/Edd family. As to quaternary structure, homodimer. [2Fe-2S] cluster serves as cofactor. The cofactor is Mg(2+).

It carries out the reaction (2R)-2,3-dihydroxy-3-methylbutanoate = 3-methyl-2-oxobutanoate + H2O. The enzyme catalyses (2R,3R)-2,3-dihydroxy-3-methylpentanoate = (S)-3-methyl-2-oxopentanoate + H2O. Its pathway is amino-acid biosynthesis; L-isoleucine biosynthesis; L-isoleucine from 2-oxobutanoate: step 3/4. The protein operates within amino-acid biosynthesis; L-valine biosynthesis; L-valine from pyruvate: step 3/4. Functionally, functions in the biosynthesis of branched-chain amino acids. Catalyzes the dehydration of (2R,3R)-2,3-dihydroxy-3-methylpentanoate (2,3-dihydroxy-3-methylvalerate) into 2-oxo-3-methylpentanoate (2-oxo-3-methylvalerate) and of (2R)-2,3-dihydroxy-3-methylbutanoate (2,3-dihydroxyisovalerate) into 2-oxo-3-methylbutanoate (2-oxoisovalerate), the penultimate precursor to L-isoleucine and L-valine, respectively. In Aromatoleum aromaticum (strain DSM 19018 / LMG 30748 / EbN1) (Azoarcus sp. (strain EbN1)), this protein is Dihydroxy-acid dehydratase 3.